The chain runs to 102 residues: Small ribosomal subunit protein uS10 (102 aa).

This sequence belongs to the universal ribosomal protein uS10 family. In terms of assembly, part of the 30S ribosomal subunit.

In terms of biological role, involved in the binding of tRNA to the ribosomes. This is Small ribosomal subunit protein uS10 from Bacillus anthracis (strain A0248).